Reading from the N-terminus, the 426-residue chain is Tryptophan--tRNA ligase (426 aa).

A 'HIGH' region motif is present at residues 66 to 74; sequence PSGEMHLGN. A 'KMSKS' region motif is present at residues 314-318; the sequence is KMSSS.

It belongs to the class-I aminoacyl-tRNA synthetase family.

The protein resides in the cytoplasm. It carries out the reaction tRNA(Trp) + L-tryptophan + ATP = L-tryptophyl-tRNA(Trp) + AMP + diphosphate + H(+). In Thermoplasma acidophilum (strain ATCC 25905 / DSM 1728 / JCM 9062 / NBRC 15155 / AMRC-C165), this protein is Tryptophan--tRNA ligase.